Reading from the N-terminus, the 238-residue chain is uncharacterized protein (238 aa).

Residues glutamate 219–isoleucine 238 are disordered. Over residues aspartate 227–isoleucine 238 the composition is skewed to acidic residues.

This is an uncharacterized protein from Buchnera aphidicola subsp. Acyrthosiphon pisum (strain APS) (Acyrthosiphon pisum symbiotic bacterium).